Consider the following 252-residue polypeptide: 4-hydroxy-tetrahydrodipicolinate reductase (252 aa).

8–13 (GALGRM) contributes to the NAD(+) binding site. Arginine 36 serves as a coordination point for NADP(+). NAD(+) contacts are provided by residues 89 to 91 (GTT) and 114 to 117 (SSNF). Catalysis depends on histidine 146, which acts as the Proton donor/acceptor. Histidine 147 contacts (S)-2,3,4,5-tetrahydrodipicolinate. Lysine 150 (proton donor) is an active-site residue. 156 to 157 (GT) contacts (S)-2,3,4,5-tetrahydrodipicolinate.

This sequence belongs to the DapB family.

Its subcellular location is the cytoplasm. It catalyses the reaction (S)-2,3,4,5-tetrahydrodipicolinate + NAD(+) + H2O = (2S,4S)-4-hydroxy-2,3,4,5-tetrahydrodipicolinate + NADH + H(+). The enzyme catalyses (S)-2,3,4,5-tetrahydrodipicolinate + NADP(+) + H2O = (2S,4S)-4-hydroxy-2,3,4,5-tetrahydrodipicolinate + NADPH + H(+). It participates in amino-acid biosynthesis; L-lysine biosynthesis via DAP pathway; (S)-tetrahydrodipicolinate from L-aspartate: step 4/4. Catalyzes the conversion of 4-hydroxy-tetrahydrodipicolinate (HTPA) to tetrahydrodipicolinate. This is 4-hydroxy-tetrahydrodipicolinate reductase from Methanoculleus marisnigri (strain ATCC 35101 / DSM 1498 / JR1).